The chain runs to 428 residues: Adenylosuccinate synthetase (428 aa).

Residues G12 to K18 and G40 to T42 each bind GTP. D13 serves as the catalytic Proton acceptor. The Mg(2+) site is built by D13 and G40. Residues D13–K16, N38–H41, T130, R144, Q225, T240, and R304 contribute to the IMP site. H41 acts as the Proton donor in catalysis. V300–R306 provides a ligand contact to substrate. GTP contacts are provided by residues R306, K332 to D334, and G414 to G416.

It belongs to the adenylosuccinate synthetase family. In terms of assembly, homodimer. Mg(2+) is required as a cofactor.

Its subcellular location is the cytoplasm. It carries out the reaction IMP + L-aspartate + GTP = N(6)-(1,2-dicarboxyethyl)-AMP + GDP + phosphate + 2 H(+). Its pathway is purine metabolism; AMP biosynthesis via de novo pathway; AMP from IMP: step 1/2. In terms of biological role, plays an important role in the de novo pathway of purine nucleotide biosynthesis. Catalyzes the first committed step in the biosynthesis of AMP from IMP. The polypeptide is Adenylosuccinate synthetase (Clostridium botulinum (strain Eklund 17B / Type B)).